Reading from the N-terminus, the 801-residue chain is Ent-copalyl diphosphate synthase, chloroplastic (801 aa).

A substrate-binding site is contributed by lysine 241. 2 residues coordinate Mg(2+): aspartate 373 and aspartate 375. Residues aspartate 373–aspartate 376 carry the DXDD motif motif. Residue lysine 459 participates in substrate binding.

This sequence belongs to the terpene synthase family. Mg(2+) serves as cofactor.

The protein localises to the plastid. The protein resides in the chloroplast. The enzyme catalyses (2E,6E,10E)-geranylgeranyl diphosphate = ent-copalyl diphosphate. Its pathway is plant hormone biosynthesis; gibberellin biosynthesis. In terms of biological role, catalyzes the conversion of geranylgeranyl diphosphate to the gibberellin precursor ent-copalyl diphosphate. This Pisum sativum (Garden pea) protein is Ent-copalyl diphosphate synthase, chloroplastic.